The sequence spans 319 residues: tRNA uridine(34) hydroxylase (319 aa).

The region spanning 125-219 (LDENTVVIDA…YGKDPEVQGD (95 aa)) is the Rhodanese domain. Cys179 (cysteine persulfide intermediate) is an active-site residue.

The protein belongs to the TrhO family.

It catalyses the reaction uridine(34) in tRNA + AH2 + O2 = 5-hydroxyuridine(34) in tRNA + A + H2O. In terms of biological role, catalyzes oxygen-dependent 5-hydroxyuridine (ho5U) modification at position 34 in tRNAs. This Lactococcus lactis subsp. cremoris (strain MG1363) protein is tRNA uridine(34) hydroxylase.